Reading from the N-terminus, the 589-residue chain is Protein kinase G11A (589 aa).

The segment at 1 to 167 (MASKAMPRAP…SACSSISSVT (167 aa)) is disordered. Composition is skewed to polar residues over residues 15–36 (NLQS…SPSK) and 63–76 (TQHQ…TGSN). Positions 91–100 (RLADEEKGVV) are enriched in basic and acidic residues. Over residues 142–165 (SSSRCRPSTSSDVSDESACSSISS) the composition is skewed to low complexity. The Protein kinase domain maps to 195–533 (FKLLKKLGCG…ATEIKQHPFF (339 aa)). ATP is bound by residues 201-209 (LGCGDIGSV) and Lys-224. Asp-320 (proton acceptor) is an active-site residue. Residues 551 to 589 (RPVEIERPPKQPVSTSEPAAAPSDAAQKSSDSYLEFDFF) form a disordered region.

It belongs to the protein kinase superfamily. Ser/Thr protein kinase family.

It carries out the reaction L-seryl-[protein] + ATP = O-phospho-L-seryl-[protein] + ADP + H(+). The enzyme catalyses L-threonyl-[protein] + ATP = O-phospho-L-threonyl-[protein] + ADP + H(+). In terms of biological role, may play a role in the regulation of metabolism and signal transduction processes. In Oryza sativa subsp. japonica (Rice), this protein is Protein kinase G11A.